A 446-amino-acid chain; its full sequence is Calcium-binding and coiled-coil domain-containing protein 2 (446 aa).

The CLIR motif lies at 133-136 (ILVV). Residues 137 to 349 (TTQGEVEEIE…RENSRLLSYM (213 aa)) adopt a coiled-coil conformation. The short motif at 203–206 (DYWE) is the LIR-like element. The interval 371 to 381 (NPGLVYGNPYS) is interaction with LGALS8. Positions 395 to 446 (KKCPICKADDICDHILEQQQMQPLCLNCPICDKIFPATEKQIFEDHVFCHSL) are interaction with MYO6. The segment at 419-444 (CLNCPICDKIFPATEKQIFEDHVFCH) adopts a UBZ1-type zinc-finger fold. Zn(2+) contacts are provided by Cys422, Cys425, His440, and His444. At Ser445 the chain carries Phosphoserine.

It belongs to the CALCOCO family. As to quaternary structure, dimer. Part of a complex consisting of CALCOCO2, TAX1BP1 and MYO6. Interacts with MYO6. Interacts with GEMIN4. Interacts with ATG8 family members MAP1LC3A, MAP1LC3B, GABARAP, GABARAPL1 and GABARAPL2. Interacts with ATG8 family member MAP1LC3C. Interacts with LGALS8. Interacts with TOM1; the interaction is indirect and is mediated by MYO6, which acts as a bridge between TOM1 and CALCOCO2. Interacts with AZI2.

The protein localises to the cytoplasm. It localises to the perinuclear region. It is found in the cytoskeleton. Its subcellular location is the cytoplasmic vesicle. The protein resides in the autophagosome membrane. Functionally, xenophagy-specific receptor required for autophagy-mediated intracellular bacteria degradation. Acts as an effector protein of galectin-sensed membrane damage that restricts the proliferation of infecting pathogens upon entry into the cytosol by targeting LGALS8-associated bacteria for autophagy. Initially orchestrates bacteria targeting to autophagosomes and subsequently ensures pathogen degradation by regulating pathogen-containing autophagosome maturation. Bacteria targeting to autophagosomes relies on its interaction with MAP1LC3A, MAP1LC3B and/or GABARAPL2, whereas regulation of pathogen-containing autophagosome maturation requires the interaction with MAP3LC3C. May play a role in ruffle formation and actin cytoskeleton organization and seems to negatively regulate constitutive secretion. The protein is Calcium-binding and coiled-coil domain-containing protein 2 of Pongo abelii (Sumatran orangutan).